The sequence spans 463 residues: Chitobiosyldiphosphodolichol beta-mannosyltransferase (463 aa).

Residues 1–3 (MKA) are Lumenal-facing. A helical membrane pass occupies residues 4–24 (WHWSVTLVVIYLAIPVILYLL). The Cytoplasmic segment spans residues 25 to 105 (TRKDDRKPLS…PLILNTRKLP (81 aa)). The helical intramembrane region spans 106–126 (FVVFGILKVIRQHWLLISLLY). The Lumenal portion of the chain corresponds to 127–463 (KLRGADYLLV…FSSSSSDDDH (337 aa)).

This sequence belongs to the glycosyltransferase group 1 family.

Its subcellular location is the endoplasmic reticulum membrane. The catalysed reaction is an N,N'-diacetylchitobiosyl-diphospho-di-trans,poly-cis-dolichol + GDP-alpha-D-mannose = a beta-D-Man-(1-&gt;4)-beta-D-GlcNAc-(1-&gt;4)-alpha-D-GlcNAc-diphospho-di-trans,poly-cis-dolichol + GDP + H(+). It functions in the pathway protein modification; protein glycosylation. Functionally, participates in the formation of the lipid-linked precursor oligosaccharide for N-glycosylation. Involved in assembling the dolichol-pyrophosphate-GlcNAc(2)-Man(5) intermediate on the cytoplasmic surface of the ER. This chain is Chitobiosyldiphosphodolichol beta-mannosyltransferase (ALG1), found in Yarrowia lipolytica (strain CLIB 122 / E 150) (Yeast).